The following is a 335-amino-acid chain: UPF0324 membrane protein LMOf2365_2179 (335 aa).

A run of 8 helical transmembrane segments spans residues 10 to 28, 33 to 55, 91 to 113, 123 to 142, 155 to 177, 251 to 270, 277 to 299, and 309 to 331; these read TFWYGIALTFCIATLSYFL, FLMILGQLVTAILIGIIIRALFP, AGWRVFLIAALCLSFGITIVYFL, LAILVACGTGICGAAAVVAI, VAATIIALLGTIFTVIYTLIYPI, VPWFIFGFLATSAINSFGII, FLVICAYFLIAMSMGGLGLNVHL, and PFAAALIGSVFLSAFGLALVLLF.

Belongs to the UPF0324 family.

The protein localises to the cell membrane. This chain is UPF0324 membrane protein LMOf2365_2179, found in Listeria monocytogenes serotype 4b (strain F2365).